Reading from the N-terminus, the 563-residue chain is Endogenous retroviral envelope protein HEMO (563 aa).

A signal peptide spans 1–26; it reads MGSLSNYALLQLTLTAFLTILVQPQH. At 27–488 the chain is on the extracellular side; it reads LLAPVFRTLS…IFAKVGDWFR (462 aa). Asparagine 122 and asparagine 192 each carry an N-linked (GlcNAc...) asparagine glycan. The chain crosses the membrane as a helical span at residues 489–509; sequence SWGYVLLIVLFCLFIFVLIYV. At 510-563 the chain is on the cytoplasmic side; the sequence is RVFRKSRRSLNSQPLNLALSPQQSAQLLVSETSCQVSNRAMKGLTTHQYDTSLL.

It belongs to the gamma type-C retroviral envelope protein family. Post-translationally, N-glycosylated. In terms of processing, cleaved by some metalloproteinase at 432-Gln-Arg-433 (mainly) or 433-Arg-Gln-434, leading to release the secreted form (Endogenous retroviral envelope protein HEMO, secreted form) in the extracellular medium. In terms of tissue distribution, expressed at high level in the placenta and stem cells (at protein level). Also expressed in the kidney but at a lower level. Endogenous retroviral envelope protein HEMO, secreted form: Present in the blood of pregnant women (at protein level).

The protein resides in the cell membrane. Its subcellular location is the secreted. Its function is as follows. Endogenous envelope proteins originate from retroviral envelope proteins, which mediate receptor recognition and membrane fusion during early infection. Endogenous envelope proteins may have kept, lost or modified their original function during evolution. This Homo sapiens (Human) protein is Endogenous retroviral envelope protein HEMO.